The following is a 575-amino-acid chain: E3 ubiquitin-protein ligase IpaH1.4 (575 aa).

The tract at residues 1–270 (MIKSTNIQAI…PDYSGPQIFF (270 aa)) is interaction with target proteins. LRR repeat units follow at residues 69 to 90 (LQNQ…PDLP), 91 to 115 (PQIT…MLKV), 117 to 130 (HAQF…PALP), 131 to 150 (ETLE…PFLP), 151 to 170 (ENLT…PLLP), 171 to 195 (PELK…KLEG), 197 to 209 (ALAN…LPEL), and 210 to 233 (PFSM…VLRL). The tract at residues 271 to 281 (SMGNSATISAP) is linker. The tract at residues 282 to 575 (EHSLADAVTA…LSENGSNHIA (294 aa)) is E3 ubiquitin-protein ligase catalytic domain. In terms of domain architecture, NEL spans 284–575 (SLADAVTAWF…LSENGSNHIA (292 aa)). C368 functions as the Glycyl thioester intermediate in the catalytic mechanism.

The protein belongs to the LRR-containing bacterial E3 ligase family. In terms of assembly, interacts with human RBCK1/HOIL-1 and RNF31/HOIP components of the LUBAC complex. In terms of processing, ubiquitinated in the presence of host E1 ubiquitin-activating enzyme, E2 ubiquitin-conjugating enzyme and ubiquitin.

The protein resides in the secreted. Its subcellular location is the host cytoplasm. The catalysed reaction is S-ubiquitinyl-[E2 ubiquitin-conjugating enzyme]-L-cysteine + [acceptor protein]-L-lysine = [E2 ubiquitin-conjugating enzyme]-L-cysteine + N(6)-ubiquitinyl-[acceptor protein]-L-lysine.. Its pathway is protein modification; protein ubiquitination. Exists in an autoinhibited state in the absence of substrate protein, probably due to interactions of the leucine-rich repeat domain with the catalytic domain. Is activated upon binding to a substrate protein. Functionally, E3 ubiquitin-protein ligase effector that inhibits host cell innate immunity during bacterial infection by catalyzing 'Lys-48'-linked polyubiquitination and subsequent degradation of host RNF31/HOIP and RBCK1/HOIL-1. Host RNF31/HOIP is the catalytic component of the LUBAC complex, which conjugates linear ('Met-1'-linked) polyubiquitin chains at the surface of bacteria invading the host cytosol to form the ubiquitin coat surrounding bacteria. The bacterial ubiquitin coat acts as an 'eat-me' signal for xenophagy and promotes NF-kappa-B activation. By promoting degradation of host RNF31/HOIP, IpaH1.4 prevents formation of the bacterial ubiquitin coat and activation of host cell innate immunity. In Shigella flexneri, this protein is E3 ubiquitin-protein ligase IpaH1.4.